A 138-amino-acid polypeptide reads, in one-letter code: Ribulose bisphosphate carboxylase small subunit (138 aa).

It belongs to the RuBisCO small chain family. Heterohexadecamer of 8 large and 8 small subunits.

It is found in the plastid. The protein localises to the chloroplast. In terms of biological role, ruBisCO catalyzes two reactions: the carboxylation of D-ribulose 1,5-bisphosphate, the primary event in carbon dioxide fixation, as well as the oxidative fragmentation of the pentose substrate in the photorespiration process. Both reactions occur simultaneously and in competition at the same active site. Although the small subunit is not catalytic it is essential for maximal activity. The polypeptide is Ribulose bisphosphate carboxylase small subunit (Pyropia suborbiculata (Red alga)).